A 1272-amino-acid chain; its full sequence is Regulator of nonsense transcripts 2 (1272 aa).

A compositionally biased stretch (basic and acidic residues) spans 1–114 (MPAERKKPAS…QEEQAKRQQE (114 aa)). Disordered regions lie at residues 1–126 (MPAE…EKEE), 370–389 (DHRELQNTERQNRRILHSKG), 423–445 (NMPDLPQDKPTPEEHGPGIDIFT), and 490–517 (CQNKESNKDDTKEAKESKENKEVSSPDD). The stretch at 54-134 (EDKKKRLEDD…EESIQLHQEA (81 aa)) forms a coiled coil. The interval 94 to 133 (KKKHQEEERKKQEEQAKRQQEEEAAAQMKEKEESIQLHQE) is sufficient for interaction with UPF1. In terms of domain architecture, MIF4G 1 spans 168 to 431 (LKKNTAFVKK…ENMPDLPQDK (264 aa)). 2 stretches are compositionally biased toward basic and acidic residues: residues 428-439 (PQDKPTPEEHGP) and 490-513 (CQNKESNKDDTKEAKESKENKEVS). Positions 487–559 (EKSCQNKESN…EQEQEDEEAS (73 aa)) form a coiled coil. MIF4G domains are found at residues 569 to 758 (DAFL…CNPP) and 773 to 986 (EYVR…LRPK). A sufficient for interaction with UPF3A and UPF3B region spans residues 711–928 (GRFLFRSPES…IRLVCTILDT (218 aa)). The sufficient for interaction with EIF4A1 and EIF1 stretch occupies residues 757–1272 (PPPAEKTVKK…LIFKTGGRRR (516 aa)). Positions 839–859 (EDVGIHVVDGVLEDIRLGMEV) are binds to UPF3B. The segment at 1018–1098 (DSKDSMTEGE…DEENTEVMIK (81 aa)) is disordered. Over residues 1027-1076 (ENLEEDEEEEEGGAETEEQSGNESEVNEPEEEEGSDNDDDEGEEEEEENT) the composition is skewed to acidic residues. The tract at residues 1084-1272 (KENETDEENT…LIFKTGGRRR (189 aa)) is sufficient for interaction with UPF1 C-terminus. Thr-1088 bears the Phosphothreonine mark. Interaction with UPF1 stretches follow at residues 1105-1129 (VPCVEDEDFIQALDKMMLENLQQRS) and 1167-1207 (DTMP…AEQE). A necessary for interaction with UPF1 region spans residues 1105–1198 (VPCVEDEDFI…PMSSQLAANH (94 aa)). A disordered region spans residues 1220 to 1272 (NERQEQEDYQEMLQSLAQRPAPANTNRERRPRYQHPKGAPNADLIFKTGGRRR).

Found in a post-splicing messenger ribonucleoprotein (mRNP) complex. Associates with the exon junction complex (EJC). Interacts with SMG1, EST1A, UPF1, UPF3A, UPF3B, EIF4A1 and EIF1. In terms of tissue distribution, ubiquitous.

The protein localises to the cytoplasm. It localises to the perinuclear region. Its function is as follows. Involved in nonsense-mediated decay (NMD) of mRNAs containing premature stop codons by associating with the nuclear exon junction complex (EJC). Recruited by UPF3B associated with the EJC core at the cytoplasmic side of the nuclear envelope and the subsequent formation of an UPF1-UPF2-UPF3 surveillance complex (including UPF1 bound to release factors at the stalled ribosome) is believed to activate NMD. In cooperation with UPF3B stimulates both ATPase and RNA helicase activities of UPF1. Binds spliced mRNA. This is Regulator of nonsense transcripts 2 from Homo sapiens (Human).